The following is a 199-amino-acid chain: Recombination protein RecR (199 aa).

The C4-type zinc finger occupies 58–73 (CSVCGNLTDTDVCPLC). One can recognise a Toprim domain in the interval 81 to 176 (SVICVVEDPR…KTTRIAHGIP (96 aa)).

This sequence belongs to the RecR family.

In terms of biological role, may play a role in DNA repair. It seems to be involved in an RecBC-independent recombinational process of DNA repair. It may act with RecF and RecO. The chain is Recombination protein RecR from Acetivibrio thermocellus (strain ATCC 27405 / DSM 1237 / JCM 9322 / NBRC 103400 / NCIMB 10682 / NRRL B-4536 / VPI 7372) (Clostridium thermocellum).